The primary structure comprises 38 residues: Large ribosomal subunit protein bL36 (38 aa).

Belongs to the bacterial ribosomal protein bL36 family.

The chain is Large ribosomal subunit protein bL36 from Anaeromyxobacter dehalogenans (strain 2CP-1 / ATCC BAA-258).